Here is a 324-residue protein sequence, read N- to C-terminus: Phospho-N-acetylmuramoyl-pentapeptide-transferase (324 aa).

10 helical membrane passes run 5-25 (GLLV…PLFI), 52-72 (PTMG…IMAI), 77-97 (LGAE…IGFL), 117-137 (LLGQ…QGFD), 147-167 (ITFD…IGGS), 176-196 (LDGL…IIAV), 202-222 (AVAI…VFNA), 227-247 (VFMG…VAIL), 253-273 (LLVI…IQVI), and 302-322 (VVVT…YIGV).

It belongs to the glycosyltransferase 4 family. MraY subfamily. It depends on Mg(2+) as a cofactor.

It is found in the cell membrane. It carries out the reaction UDP-N-acetyl-alpha-D-muramoyl-L-alanyl-gamma-D-glutamyl-meso-2,6-diaminopimeloyl-D-alanyl-D-alanine + di-trans,octa-cis-undecaprenyl phosphate = di-trans,octa-cis-undecaprenyl diphospho-N-acetyl-alpha-D-muramoyl-L-alanyl-D-glutamyl-meso-2,6-diaminopimeloyl-D-alanyl-D-alanine + UMP. Its pathway is cell wall biogenesis; peptidoglycan biosynthesis. In terms of biological role, catalyzes the initial step of the lipid cycle reactions in the biosynthesis of the cell wall peptidoglycan: transfers peptidoglycan precursor phospho-MurNAc-pentapeptide from UDP-MurNAc-pentapeptide onto the lipid carrier undecaprenyl phosphate, yielding undecaprenyl-pyrophosphoryl-MurNAc-pentapeptide, known as lipid I. This chain is Phospho-N-acetylmuramoyl-pentapeptide-transferase, found in Bacillus cytotoxicus (strain DSM 22905 / CIP 110041 / 391-98 / NVH 391-98).